A 457-amino-acid polypeptide reads, in one-letter code: tRNA modification GTPase MnmE (457 aa).

Positions 25, 87, and 126 each coordinate (6S)-5-formyl-5,6,7,8-tetrahydrofolate. The TrmE-type G domain occupies 223-377 (GISTAIIGRP…IEERINNLFF (155 aa)). N233 contributes to the K(+) binding site. GTP contacts are provided by residues 233–238 (NVGKSS), 252–258 (TDIAGTT), and 277–280 (DTAG). S237 contributes to the Mg(2+) binding site. K(+)-binding residues include T252, I254, and T257. A Mg(2+)-binding site is contributed by T258. Position 457 (K457) interacts with (6S)-5-formyl-5,6,7,8-tetrahydrofolate.

The protein belongs to the TRAFAC class TrmE-Era-EngA-EngB-Septin-like GTPase superfamily. TrmE GTPase family. Homodimer. Heterotetramer of two MnmE and two MnmG subunits. K(+) serves as cofactor.

Its subcellular location is the cytoplasm. Exhibits a very high intrinsic GTPase hydrolysis rate. Involved in the addition of a carboxymethylaminomethyl (cmnm) group at the wobble position (U34) of certain tRNAs, forming tRNA-cmnm(5)s(2)U34. This Streptococcus pneumoniae serotype 4 (strain ATCC BAA-334 / TIGR4) protein is tRNA modification GTPase MnmE.